The primary structure comprises 686 residues: MCTMPATRDASGSGDASTDLIAARSLSSHQGQRSNLRIFKLLISCCLLMLCIYPNAWPWSIGPGSGPFSVSADSIKGRGDTHRLGEMGTSLSSSLPSSWLTQSNNHANISELLDNLLRGYDNSIRPDFGGPPATIEVDIMVRSMGPISEVDMTYSMDCYFRQSWVDKRLAFEGAQDTLALSVSMLARIWKPDTYFYNGKQSYLHTITTPNKFVRIYQNGRVLYSSRLTIKAGCPMNLADFPMDIQKCPLKFGSFGYTTSDVIYRWNKERPPVAIAEDMKLSQFDLVDCPAGNLTDIVYKAAAPRPQRRPFNNKDPPRPTSKVMTTFAGPAAKNQHVRGTGLKLDKGAFGTGRDATGGSGSTTGLSGTITLETNHPSEYSMLMVNFHLQRHMGNFLIQVYGPCCLLVVLSWVSFWLNREATADRVSLGITTVLTMTFLGLEARTDLPKVSYPTALDFFVFLSFGFIFATILQFAVVHYYTKYGSGECYFIIEELDSESGESETEPLTSDFRGSTESKIYEVIPLSMCAISMPPPPTRLGMLTSRNRRPRNRRHGLWSMKLLGLFDWRRRRKPPRADSDEDEDDEQTQLRANEAPTTSAAAAAAQAAAQAARISPPTGGRRRMSYYRREEMEARRKGKRTPQYNSVSKIDRASRIVFPLLFILINVFYWYGYLSRSSRILANTPDAST.

Positions 1–58 (MCTMPATRDASGSGDASTDLIAARSLSSHQGQRSNLRIFKLLISCCLLMLCIYPNAWP) are cleaved as a signal peptide. The Extracellular segment spans residues 97–393 (SSWLTQSNNH…NFHLQRHMGN (297 aa)). An N-linked (GlcNAc...) asparagine glycan is attached at Asn108. A disulfide bond links Cys233 and Cys247. N-linked (GlcNAc...) asparagine glycosylation is present at Asn292. 3 helical membrane-spanning segments follow: residues 394–414 (FLIQ…VSFW), 424–441 (VSLG…GLEA), and 456–476 (FFVF…AVVH). Topologically, residues 477-650 (YYTKYGSGEC…YNSVSKIDRA (174 aa)) are cytoplasmic. A disordered region spans residues 570–641 (KPPRADSDED…RRKGKRTPQY (72 aa)). Over residues 586-596 (QLRANEAPTTS) the composition is skewed to polar residues. Residues 597–609 (AAAAAAQAAAQAA) are compositionally biased toward low complexity. Residues 651–671 (SRIVFPLLFILINVFYWYGYL) form a helical membrane-spanning segment.

Belongs to the ligand-gated ion channel (TC 1.A.9) family. Gamma-aminobutyric acid receptor (TC 1.A.9.5) subfamily. Generally pentameric. There are five types of GABA(A) receptor chains: alpha, beta, gamma, delta, and rho. Interacts with Lcch3 (beta chain).

The protein localises to the postsynaptic cell membrane. Its subcellular location is the cell membrane. Functionally, GABA, an inhibitory neurotransmitter, mediates neuronal inhibition by binding to the GABA receptor and opening an integral chloride channel. May combine with the ligand-gated ion channel subunit Lcch3 to form cation-selective GABA-gated ion channels. The polypeptide is Gamma-aminobutyric acid receptor alpha-like (Grd) (Drosophila melanogaster (Fruit fly)).